Consider the following 600-residue polypeptide: DNA primase (600 aa).

A CHC2-type zinc finger spans residues 38-62 (CPFHDEKTPSFIVYPTRGHYHCYGC). The 81-residue stretch at 253–333 (KRVILVEGQA…GIAVIVCRLP (81 aa)) folds into the Toprim domain. Mg(2+) contacts are provided by glutamate 259, aspartate 304, and aspartate 306.

Belongs to the DnaG primase family. As to quaternary structure, monomer. Interacts with DnaB. Requires Zn(2+) as cofactor. Mg(2+) serves as cofactor.

The enzyme catalyses ssDNA + n NTP = ssDNA/pppN(pN)n-1 hybrid + (n-1) diphosphate.. Functionally, RNA polymerase that catalyzes the synthesis of short RNA molecules used as primers for DNA polymerase during DNA replication. In Chlamydia muridarum (strain MoPn / Nigg), this protein is DNA primase.